The following is a 205-amino-acid chain: Urease accessory protein UreG (205 aa).

GTP is bound at residue 10–17; sequence GPVGAGKT.

This sequence belongs to the SIMIBI class G3E GTPase family. UreG subfamily. As to quaternary structure, homodimer. UreD, UreF and UreG form a complex that acts as a GTP-hydrolysis-dependent molecular chaperone, activating the urease apoprotein by helping to assemble the nickel containing metallocenter of UreC. The UreE protein probably delivers the nickel.

The protein resides in the cytoplasm. In terms of biological role, facilitates the functional incorporation of the urease nickel metallocenter. This process requires GTP hydrolysis, probably effectuated by UreG. The polypeptide is Urease accessory protein UreG (Corynebacterium glutamicum (strain ATCC 13032 / DSM 20300 / JCM 1318 / BCRC 11384 / CCUG 27702 / LMG 3730 / NBRC 12168 / NCIMB 10025 / NRRL B-2784 / 534)).